Here is a 179-residue protein sequence, read N- to C-terminus: Ribosome maturation factor RimM (179 aa).

A PRC barrel domain is found at 100–176; sequence KEEFHLLELI…FIIINPPNGL (77 aa).

This sequence belongs to the RimM family. Binds ribosomal protein uS19.

Its subcellular location is the cytoplasm. Functionally, an accessory protein needed during the final step in the assembly of 30S ribosomal subunit, possibly for assembly of the head region. Essential for efficient processing of 16S rRNA. May be needed both before and after RbfA during the maturation of 16S rRNA. It has affinity for free ribosomal 30S subunits but not for 70S ribosomes. The chain is Ribosome maturation factor RimM from Prochlorococcus marinus (strain MIT 9215).